A 557-amino-acid polypeptide reads, in one-letter code: Glutamine--tRNA ligase (557 aa).

The 'HIGH' region signature appears at 42-52 (PEPNGYLHIGH). Residues 43 to 45 (EPN) and 49 to 55 (HIGHAKS) contribute to the ATP site. Residues D75 and Y220 each coordinate L-glutamine. ATP-binding positions include T239 and 270 to 271 (RL). The short motif at 277-281 (LTSKR) is the 'KMSKS' region element.

The protein belongs to the class-I aminoacyl-tRNA synthetase family. Monomer.

It is found in the cytoplasm. The enzyme catalyses tRNA(Gln) + L-glutamine + ATP = L-glutaminyl-tRNA(Gln) + AMP + diphosphate. The chain is Glutamine--tRNA ligase from Haemophilus influenzae (strain 86-028NP).